The sequence spans 127 residues: Large ribosomal subunit protein bL17 (127 aa).

Belongs to the bacterial ribosomal protein bL17 family. Part of the 50S ribosomal subunit. Contacts protein L32.

This chain is Large ribosomal subunit protein bL17, found in Haemophilus ducreyi (strain 35000HP / ATCC 700724).